The primary structure comprises 385 residues: Heterogeneous nuclear ribonucleoprotein 87F (385 aa).

RRM domains lie at 24–101 (RKLF…RAVP) and 115–192 (KKLF…KAIA). 2 disordered regions span residues 192–289 (AKQD…WNGG) and 305–385 (GNGG…NRRY). Composition is skewed to gly residues over residues 199–289 (QGGG…WNGG) and 305–317 (GNGG…GGFG). Residues 319 to 336 (EYQQSYGGGPQRNSNFGN) are compositionally biased toward polar residues. 2 stretches are compositionally biased toward gly residues: residues 344–362 (QGGG…GQGF) and 369–385 (TGGG…NRRY).

Its subcellular location is the nucleus. It is found in the cytoplasm. This protein is a component of ribonucleosomes. Could be needed to organize a concentration gradient of a dorsalizing morphogen (Dm) originating in the germinal vesicle. The polypeptide is Heterogeneous nuclear ribonucleoprotein 87F (Hrb87F) (Drosophila melanogaster (Fruit fly)).